The sequence spans 410 residues: UDP-N-acetylglucosamine--N-acetylmuramyl-(pentapeptide) pyrophosphoryl-undecaprenol N-acetylglucosamine transferase (410 aa).

A disordered region spans residues 1-35; it reads MKDTVSQPAGGRGATAPRPADAASPSCGSSPSADS. Positions 14–35 are enriched in low complexity; the sequence is ATAPRPADAASPSCGSSPSADS. UDP-N-acetyl-alpha-D-glucosamine-binding positions include 45–47, N167, R204, S238, and Q334; that span reads TAG.

The protein belongs to the glycosyltransferase 28 family. MurG subfamily.

It localises to the cell membrane. It carries out the reaction di-trans,octa-cis-undecaprenyl diphospho-N-acetyl-alpha-D-muramoyl-L-alanyl-D-glutamyl-meso-2,6-diaminopimeloyl-D-alanyl-D-alanine + UDP-N-acetyl-alpha-D-glucosamine = di-trans,octa-cis-undecaprenyl diphospho-[N-acetyl-alpha-D-glucosaminyl-(1-&gt;4)]-N-acetyl-alpha-D-muramoyl-L-alanyl-D-glutamyl-meso-2,6-diaminopimeloyl-D-alanyl-D-alanine + UDP + H(+). It functions in the pathway cell wall biogenesis; peptidoglycan biosynthesis. Cell wall formation. Catalyzes the transfer of a GlcNAc subunit on undecaprenyl-pyrophosphoryl-MurNAc-pentapeptide (lipid intermediate I) to form undecaprenyl-pyrophosphoryl-MurNAc-(pentapeptide)GlcNAc (lipid intermediate II). This is UDP-N-acetylglucosamine--N-acetylmuramyl-(pentapeptide) pyrophosphoryl-undecaprenol N-acetylglucosamine transferase from Mycobacterium tuberculosis (strain ATCC 25177 / H37Ra).